A 397-amino-acid chain; its full sequence is Acetate kinase (397 aa).

Residue Asn7 participates in Mg(2+) binding. Residue Lys14 participates in ATP binding. Arg91 contacts substrate. Asp148 functions as the Proton donor/acceptor in the catalytic mechanism. ATP is bound by residues 208-212 (HLGNG), 283-285 (DLR), and 331-335 (GVGEN). Mg(2+) is bound at residue Glu384.

The protein belongs to the acetokinase family. As to quaternary structure, homodimer. The cofactor is Mg(2+). It depends on Mn(2+) as a cofactor.

It is found in the cytoplasm. It carries out the reaction acetate + ATP = acetyl phosphate + ADP. It functions in the pathway metabolic intermediate biosynthesis; acetyl-CoA biosynthesis; acetyl-CoA from acetate: step 1/2. Its function is as follows. Catalyzes the formation of acetyl phosphate from acetate and ATP. Can also catalyze the reverse reaction. In Syntrophomonas wolfei subsp. wolfei (strain DSM 2245B / Goettingen), this protein is Acetate kinase.